The following is a 704-amino-acid chain: Elongation factor G (704 aa).

In terms of domain architecture, tr-type G spans 10-290 (KKVRNIGIMA…AVVDYLPSPL (281 aa)). Residues 19–26 (AHIDAGKT), 83–87 (DTPGH), and 137–140 (NKMD) contribute to the GTP site.

This sequence belongs to the TRAFAC class translation factor GTPase superfamily. Classic translation factor GTPase family. EF-G/EF-2 subfamily.

The protein localises to the cytoplasm. Functionally, catalyzes the GTP-dependent ribosomal translocation step during translation elongation. During this step, the ribosome changes from the pre-translocational (PRE) to the post-translocational (POST) state as the newly formed A-site-bound peptidyl-tRNA and P-site-bound deacylated tRNA move to the P and E sites, respectively. Catalyzes the coordinated movement of the two tRNA molecules, the mRNA and conformational changes in the ribosome. The sequence is that of Elongation factor G from Kocuria rhizophila (strain ATCC 9341 / DSM 348 / NBRC 103217 / DC2201).